The primary structure comprises 475 residues: tRNA-2-methylthio-N(6)-dimethylallyladenosine synthase (475 aa).

Positions 1-20 are disordered; the sequence is MEQNLTTERSETSSSRAGTA. The 121-residue stretch at 25–145 folds into the MTTase N-terminal domain; sequence KKVFVKTYGC…LPSVVTRARA (121 aa). [4Fe-4S] cluster contacts are provided by C34, C70, C108, C186, C190, and C193. Positions 172–404 constitute a Radical SAM core domain; the sequence is RSRGVTAFLT…QALLAEQQRA (233 aa). The 63-residue stretch at 407–469 folds into the TRAM domain; that stretch reads ESLVGTEIDL…GHSLFCEPAG (63 aa).

Belongs to the methylthiotransferase family. MiaB subfamily. Monomer. Requires [4Fe-4S] cluster as cofactor.

The protein resides in the cytoplasm. The catalysed reaction is N(6)-dimethylallyladenosine(37) in tRNA + (sulfur carrier)-SH + AH2 + 2 S-adenosyl-L-methionine = 2-methylsulfanyl-N(6)-dimethylallyladenosine(37) in tRNA + (sulfur carrier)-H + 5'-deoxyadenosine + L-methionine + A + S-adenosyl-L-homocysteine + 2 H(+). Functionally, catalyzes the methylthiolation of N6-(dimethylallyl)adenosine (i(6)A), leading to the formation of 2-methylthio-N6-(dimethylallyl)adenosine (ms(2)i(6)A) at position 37 in tRNAs that read codons beginning with uridine. The sequence is that of tRNA-2-methylthio-N(6)-dimethylallyladenosine synthase from Chelativorans sp. (strain BNC1).